The chain runs to 261 residues: Eukaryotic translation initiation factor 3 subunit J-A (261 aa).

The span at 1–11 shows a compositional bias: low complexity; it reads MAAAAAAAAAA. The interval 1 to 113 is disordered; that stretch reads MAAAAAAAAA…EPEESKVLTP (113 aa). Residues 4 to 72 form a sufficient for interaction with EIF3B region; the sequence is AAAAAAAAGD…KEEAEVKPEV (69 aa). Residues S14, S16, and S23 each carry the phosphoserine modification. Acidic residues predominate over residues 43–64; the sequence is EGEDEDEDVKDNWDDDDDENKE. Over residues 65–109 the composition is skewed to basic and acidic residues; sequence EAEVKPEVKISEKKKIAEKIKEKERQQKKRQEEIKKRLEEPEESK. Residues 73-138 are a coiled coil; sequence KISEKKKIAE…ESDLELAKET (66 aa). A Glycyl lysine isopeptide (Lys-Gly) (interchain with G-Cter in SUMO2) cross-link involves residue K109. T112 carries the phosphothreonine modification. S130 bears the Phosphoserine mark. Residues 246–261 form a promotes stable association with the 40S ribosome region; it reads YGGYEGGYVQDYEDFM. Y257 carries the post-translational modification Phosphotyrosine.

The protein belongs to the eIF-3 subunit J family. In terms of assembly, component of the eukaryotic translation initiation factor 3 (eIF-3) complex, which is composed of 13 subunits: EIF3A, EIF3B, EIF3C, EIF3D, EIF3E, EIF3F, EIF3G, EIF3H, EIF3I, EIF3J, EIF3K, EIF3L and EIF3M. The eIF-3 complex appears to include 3 stable modules: module A is composed of EIF3A, EIF3B, EIF3G and EIF3I; module B is composed of EIF3F, EIF3H, and EIF3M; and module C is composed of EIF3C, EIF3D, EIF3E, EIF3K and EIF3L. EIF3C of module C binds EIF3B of module A and EIF3H of module B, thereby linking the three modules. EIF3J is a labile subunit that binds to the eIF-3 complex via EIF3B. The eIF-3 complex interacts with RPS6KB1 under conditions of nutrient depletion. Mitogenic stimulation leads to binding and activation of a complex composed of MTOR and RPTOR, leading to phosphorylation and release of RPS6KB1 and binding of EIF4B to eIF-3. In terms of processing, phosphorylated. Phosphorylation is enhanced upon serum stimulation.

Its subcellular location is the cytoplasm. Functionally, component of the eukaryotic translation initiation factor 3 (eIF-3) complex, which is required for several steps in the initiation of protein synthesis. The eIF-3 complex associates with the 40S ribosome and facilitates the recruitment of eIF-1, eIF-1A, eIF-2:GTP:methionyl-tRNAi and eIF-5 to form the 43S pre-initiation complex (43S PIC). The eIF-3 complex stimulates mRNA recruitment to the 43S PIC and scanning of the mRNA for AUG recognition. The eIF-3 complex is also required for disassembly and recycling of post-termination ribosomal complexes and subsequently prevents premature joining of the 40S and 60S ribosomal subunits prior to initiation. The eIF-3 complex specifically targets and initiates translation of a subset of mRNAs involved in cell proliferation, including cell cycling, differentiation and apoptosis, and uses different modes of RNA stem-loop binding to exert either translational activation or repression. This subunit binds directly within the mRNA entry channel of the 40S ribosome to the aminoacyl (A) site. It may regulate the interaction between the 43S PIC and mRNA. This Mus musculus (Mouse) protein is Eukaryotic translation initiation factor 3 subunit J-A (Eif3j1).